Reading from the N-terminus, the 274-residue chain is 16S rRNA (guanine(1405)-N(7))-methyltransferase (274 aa).

Residues Phe64, 102–104 (HVS), Arg108, Ala133, Asp156, 182–183 (DL), Leu198, and Gln207 each bind S-adenosyl-L-methionine.

Belongs to the methyltransferase superfamily. Aminoglycoside resistance family.

The enzyme catalyses guanosine(1405) in 16S rRNA + S-adenosyl-L-methionine = N(7)-methylguanosine(1405) in 16S rRNA + S-adenosyl-L-homocysteine. In terms of biological role, specifically methylates the N(7) position of guanine 1405 in 16S rRNA. Confers resistance to various aminoglycosides, including gentamicin and kanamycin. The protein is 16S rRNA (guanine(1405)-N(7))-methyltransferase (grm) of Micromonospora echinospora (Micromonospora purpurea).